The following is a 362-amino-acid chain: Oxysterol-binding protein 5 (362 aa).

The protein belongs to the OSBP family.

The protein is Oxysterol-binding protein 5 (osbE) of Dictyostelium discoideum (Social amoeba).